A 757-amino-acid polypeptide reads, in one-letter code: MDSLFVEEVAASLVREFLSRKGLKKTCVTMDQERPRSDLSINNRNDLRKVLHLEFLYKENKAKENPLKTSLELITRYFLDHFGNTANNFTQDTPIPALSVPKKNNKVPSRCSETTLVNIYDLSDEDAGWRTSLSETSKARHDNLDGDVLGNFVSSKRPPHKSKPMQTVPGETPVLTSAWEKIDKLHSEPSLDVKRMGENSRPKSGLIVRGMMSGPIASSPQDSFHRHYLRRSSPSSSSTQPQEESRKVPELFVCTQQDILASSNSSPSRTSLGQLSELTVERQKTTASSPPHLPSKRLPPWDRARPRDPSEDTPAVDGSTDTDRMPLKLYLPGGNSRMTQERLERAFKRQGSQPAPVRKNQLLPSDKVDGELGALRLEDVEDELIREEVILSPVPSVLKLQTASKPIDLSVAKEIKTLLFGSSFCCFNEEWKLQSFSFSNTASLKYGIVQNKGGPCGVLAAVQGCVLQKLLFEGDSKADCAQGLQPSDAHRTRCLVLALADIVWRAGGRERAVVALASRTQQFSPTGKYKADGVLETLTLHSLTCYEDLVTFLQQSIHQFEVGPYGCILLTLSAILSRSTELIRQDFDVPTSHLIGAHGYCTQELVNLLLTGKAVSNVFNDVVELDSGDGNITLLRGIAARSDIGFLSLFEHYNMCQVGCFLKTPRFPIWVVCSESHFSILFSLQPGLLRDWRTERLFDLYYYDGLANQQEQIRLTIDTTQTISEDTDNDLVPPLELCIRTKWKGASVNWNGSDPIL.

Disordered stretches follow at residues 152–173 and 190–334; these read FVSS…GETP and SLDV…LPGG. Positions 190-201 are enriched in basic and acidic residues; it reads SLDVKRMGENSR. Ser-219 and Ser-223 each carry phosphoserine. Residues 232–242 are compositionally biased toward low complexity; the sequence is SSPSSSSTQPQ. Residues 254-277 show a composition bias toward polar residues; sequence CTQQDILASSNSSPSRTSLGQLSE. Residue Ser-289 is modified to Phosphoserine. Residues 299-310 show a composition bias toward basic and acidic residues; that stretch reads PPWDRARPRDPS. The active-site Nucleophile is the Cys-456. His-677 functions as the Proton acceptor in the catalytic mechanism.

This sequence belongs to the MINDY deubiquitinase family. FAM188 subfamily.

It catalyses the reaction Thiol-dependent hydrolysis of ester, thioester, amide, peptide and isopeptide bonds formed by the C-terminal Gly of ubiquitin (a 76-residue protein attached to proteins as an intracellular targeting signal).. Its function is as follows. Probable hydrolase that can remove 'Lys-48'-linked conjugated ubiquitin from proteins. In Homo sapiens (Human), this protein is Probable ubiquitin carboxyl-terminal hydrolase MINDY-4.